The chain runs to 88 residues: Defensin-like protein 24 (88 aa).

The N-terminal stretch at M1–A23 is a signal peptide. 4 disulfides stabilise this stretch: C37/C87, C47/C72, C56/C83, and C60/C85.

Belongs to the DEFL family.

Its subcellular location is the secreted. The chain is Defensin-like protein 24 from Arabidopsis thaliana (Mouse-ear cress).